A 497-amino-acid polypeptide reads, in one-letter code: Probable cytosol aminopeptidase (497 aa).

Mn(2+) contacts are provided by Lys263 and Asp268. The active site involves Lys275. Residues Asp286, Asp345, and Glu347 each coordinate Mn(2+). The active site involves Arg349.

Belongs to the peptidase M17 family. Mn(2+) serves as cofactor.

The protein localises to the cytoplasm. The catalysed reaction is Release of an N-terminal amino acid, Xaa-|-Yaa-, in which Xaa is preferably Leu, but may be other amino acids including Pro although not Arg or Lys, and Yaa may be Pro. Amino acid amides and methyl esters are also readily hydrolyzed, but rates on arylamides are exceedingly low.. It catalyses the reaction Release of an N-terminal amino acid, preferentially leucine, but not glutamic or aspartic acids.. Its function is as follows. Presumably involved in the processing and regular turnover of intracellular proteins. Catalyzes the removal of unsubstituted N-terminal amino acids from various peptides. The sequence is that of Probable cytosol aminopeptidase from Agrobacterium fabrum (strain C58 / ATCC 33970) (Agrobacterium tumefaciens (strain C58)).